We begin with the raw amino-acid sequence, 100 residues long: Urease subunit gamma (100 aa).

This sequence belongs to the urease gamma subunit family. Heterotrimer of UreA (gamma), UreB (beta) and UreC (alpha) subunits. Three heterotrimers associate to form the active enzyme.

It localises to the cytoplasm. The enzyme catalyses urea + 2 H2O + H(+) = hydrogencarbonate + 2 NH4(+). It functions in the pathway nitrogen metabolism; urea degradation; CO(2) and NH(3) from urea (urease route): step 1/1. In Cupriavidus taiwanensis (strain DSM 17343 / BCRC 17206 / CCUG 44338 / CIP 107171 / LMG 19424 / R1) (Ralstonia taiwanensis (strain LMG 19424)), this protein is Urease subunit gamma.